The following is a 549-amino-acid chain: Ribosomal protein S6 kinase-like 1 (549 aa).

The region spanning 87–115 is the MIT domain; sequence IHVDPNKERREAVKLKITKYLRRAEEIFN. Residues 145 to 539 form the Protein kinase domain; the sequence is SAVEQLRGCR…VSKLKSHPFF (395 aa). ATP is bound by residues 151-159 and Lys177; that span reads RGCRVVGVI. The segment at 260 to 325 is disordered; that stretch reads LTPARLPSGH…SDLPKAPGGH (66 aa). Residue Asp412 is the Proton acceptor of the active site.

The protein belongs to the protein kinase superfamily. Ser/Thr protein kinase family. S6 kinase subfamily.

The catalysed reaction is L-seryl-[protein] + ATP = O-phospho-L-seryl-[protein] + ADP + H(+). It carries out the reaction L-threonyl-[protein] + ATP = O-phospho-L-threonyl-[protein] + ADP + H(+). The protein is Ribosomal protein S6 kinase-like 1 (RPS6KL1) of Pongo abelii (Sumatran orangutan).